Consider the following 110-residue polypeptide: uncharacterized protein (110 aa).

This is an uncharacterized protein from Sulfolobus islandicus rod-shaped virus 1 (SIRV-1).